Reading from the N-terminus, the 37-residue chain is Large ribosomal subunit protein bL36 (37 aa).

The protein belongs to the bacterial ribosomal protein bL36 family.

The sequence is that of Large ribosomal subunit protein bL36 from Geobacillus kaustophilus (strain HTA426).